The primary structure comprises 184 residues: 3-hydroxyanthranilate 3,4-dioxygenase (184 aa).

Arginine 44 serves as a coordination point for O2. Residues histidine 48, glutamate 54, and histidine 92 each contribute to the Fe cation site. Glutamate 54 serves as a coordination point for substrate. The substrate site is built by arginine 96 and glutamate 106. Residues cysteine 121, cysteine 126, cysteine 162, and cysteine 165 each coordinate a divalent metal cation.

It belongs to the 3-HAO family. The cofactor is Fe(2+).

The protein resides in the cytoplasm. The catalysed reaction is 3-hydroxyanthranilate + O2 = (2Z,4Z)-2-amino-3-carboxymuconate 6-semialdehyde. It functions in the pathway cofactor biosynthesis; NAD(+) biosynthesis; quinolinate from L-kynurenine: step 3/3. Catalyzes the oxidative ring opening of 3-hydroxyanthranilate to 2-amino-3-carboxymuconate semialdehyde, which spontaneously cyclizes to quinolinate. This is 3-hydroxyanthranilate 3,4-dioxygenase from Pyricularia oryzae (strain 70-15 / ATCC MYA-4617 / FGSC 8958) (Rice blast fungus).